Reading from the N-terminus, the 347-residue chain is Protein RecA (347 aa).

Residue 67–74 (GPESSGKT) coordinates ATP. Positions 327–347 (ALGLSSPTPKENGKEKGKAKP) are disordered. Basic and acidic residues predominate over residues 337–347 (ENGKEKGKAKP).

The protein belongs to the RecA family.

The protein localises to the cytoplasm. Can catalyze the hydrolysis of ATP in the presence of single-stranded DNA, the ATP-dependent uptake of single-stranded DNA by duplex DNA, and the ATP-dependent hybridization of homologous single-stranded DNAs. It interacts with LexA causing its activation and leading to its autocatalytic cleavage. The protein is Protein RecA of Desulforapulum autotrophicum (strain ATCC 43914 / DSM 3382 / VKM B-1955 / HRM2) (Desulfobacterium autotrophicum).